A 1465-amino-acid chain; its full sequence is DNA polymerase III PolC-type (1465 aa).

The region spanning 427–583 (YVVFDVETTG…YDAEATGRLL (157 aa)) is the Exonuclease domain.

Belongs to the DNA polymerase type-C family. PolC subfamily.

It localises to the cytoplasm. The enzyme catalyses DNA(n) + a 2'-deoxyribonucleoside 5'-triphosphate = DNA(n+1) + diphosphate. Required for replicative DNA synthesis. This DNA polymerase also exhibits 3' to 5' exonuclease activity. The chain is DNA polymerase III PolC-type from Streptococcus pyogenes serotype M1.